The primary structure comprises 198 residues: Recombination protein RecR (198 aa).

The segment at 58–73 (CSVCNNLTEKDPCDFC) adopts a C4-type zinc-finger fold. The region spanning 81-175 (NLICVVESPK…KVTRIAHGLP (95 aa)) is the Toprim domain.

It belongs to the RecR family.

May play a role in DNA repair. It seems to be involved in an RecBC-independent recombinational process of DNA repair. It may act with RecF and RecO. In Halothermothrix orenii (strain H 168 / OCM 544 / DSM 9562), this protein is Recombination protein RecR.